The following is a 320-amino-acid chain: Ferrochelatase (320 aa).

Residues histidine 194 and glutamate 275 each contribute to the Fe cation site.

The protein belongs to the ferrochelatase family.

It localises to the cytoplasm. The catalysed reaction is heme b + 2 H(+) = protoporphyrin IX + Fe(2+). Its pathway is porphyrin-containing compound metabolism; protoheme biosynthesis; protoheme from protoporphyrin-IX: step 1/1. In terms of biological role, catalyzes the ferrous insertion into protoporphyrin IX. This is Ferrochelatase from Serratia proteamaculans (strain 568).